A 189-amino-acid chain; its full sequence is Ribonuclease HII (189 aa).

The 189-residue stretch at 1-189 (MIAGVDEAGR…IAALLKNNKK (189 aa)) folds into the RNase H type-2 domain. A divalent metal cation contacts are provided by Asp-6, Glu-7, and Asp-98.

Belongs to the RNase HII family. It depends on Mn(2+) as a cofactor. Requires Mg(2+) as cofactor.

The protein resides in the cytoplasm. It carries out the reaction Endonucleolytic cleavage to 5'-phosphomonoester.. Its function is as follows. Endonuclease that specifically degrades the RNA of RNA-DNA hybrids. The chain is Ribonuclease HII from Dichelobacter nodosus (strain VCS1703A).